The chain runs to 223 residues: Cytidylate kinase (223 aa).

G10 to T18 lines the ATP pocket.

This sequence belongs to the cytidylate kinase family. Type 1 subfamily.

The protein resides in the cytoplasm. The enzyme catalyses CMP + ATP = CDP + ADP. The catalysed reaction is dCMP + ATP = dCDP + ADP. The sequence is that of Cytidylate kinase from Streptococcus pneumoniae (strain Taiwan19F-14).